The following is a 160-amino-acid chain: Small ribosomal subunit protein uS7 (160 aa).

It belongs to the universal ribosomal protein uS7 family. As to quaternary structure, part of the 30S ribosomal subunit. Contacts proteins S9 and S11.

Its function is as follows. One of the primary rRNA binding proteins, it binds directly to 16S rRNA where it nucleates assembly of the head domain of the 30S subunit. Is located at the subunit interface close to the decoding center, probably blocks exit of the E-site tRNA. The protein is Small ribosomal subunit protein uS7 of Ehrlichia chaffeensis (strain ATCC CRL-10679 / Arkansas).